The sequence spans 363 residues: UDP-3-O-acylglucosamine N-acyltransferase (363 aa).

The active-site Proton acceptor is the H266.

This sequence belongs to the transferase hexapeptide repeat family. LpxD subfamily. In terms of assembly, homotrimer.

The enzyme catalyses a UDP-3-O-[(3R)-3-hydroxyacyl]-alpha-D-glucosamine + a (3R)-hydroxyacyl-[ACP] = a UDP-2-N,3-O-bis[(3R)-3-hydroxyacyl]-alpha-D-glucosamine + holo-[ACP] + H(+). It functions in the pathway bacterial outer membrane biogenesis; LPS lipid A biosynthesis. Its function is as follows. Catalyzes the N-acylation of UDP-3-O-acylglucosamine using 3-hydroxyacyl-ACP as the acyl donor. Is involved in the biosynthesis of lipid A, a phosphorylated glycolipid that anchors the lipopolysaccharide to the outer membrane of the cell. The chain is UDP-3-O-acylglucosamine N-acyltransferase from Bordetella parapertussis (strain 12822 / ATCC BAA-587 / NCTC 13253).